A 218-amino-acid chain; its full sequence is Acetoacetyl-CoA:acetate/butyrate CoA transferase alpha subunit (218 aa).

Residue 24–30 (GGFLNCG) participates in CoA binding.

This sequence belongs to the 3-oxoacid CoA-transferase subunit A family. As to quaternary structure, heterotetramer composed of two alpha subunits (CtfA) and two beta subunits (CtfB).

The catalysed reaction is acetoacetate + butanoyl-CoA = acetoacetyl-CoA + butanoate. It catalyses the reaction acetoacetate + acetyl-CoA = acetoacetyl-CoA + acetate. With respect to regulation, the acetate and butyrate conversion reactions are inhibited in vitro by physiological levels of acetone and butanol. Its function is as follows. Catalyzes the transfer of CoA from acetoacetyl-CoA to acetate, butyrate and propionate. Also shows low activity with valerate, isobutyrate and crotonate. Plays an important role in the metabolic shift between the acid-producing and solvent-forming states of C.acetobutylicum. Acts mainly to detoxify the medium by removing the acetate and butyrate excreted earlier in the fermentation. In Clostridium acetobutylicum (strain ATCC 824 / DSM 792 / JCM 1419 / IAM 19013 / LMG 5710 / NBRC 13948 / NRRL B-527 / VKM B-1787 / 2291 / W), this protein is Acetoacetyl-CoA:acetate/butyrate CoA transferase alpha subunit.